The chain runs to 278 residues: Biotin synthase (278 aa).

The Radical SAM core domain maps to 1-227 (MQIMLCAISN…QSVVMVAGGR (227 aa)). [4Fe-4S] cluster contacts are provided by Cys16, Cys20, and Cys23. [2Fe-2S] cluster is bound by residues Cys60, Cys95, and Cys153.

It belongs to the radical SAM superfamily. Biotin synthase family. In terms of assembly, homodimer. [4Fe-4S] cluster is required as a cofactor. It depends on [2Fe-2S] cluster as a cofactor.

It carries out the reaction (4R,5S)-dethiobiotin + (sulfur carrier)-SH + 2 reduced [2Fe-2S]-[ferredoxin] + 2 S-adenosyl-L-methionine = (sulfur carrier)-H + biotin + 2 5'-deoxyadenosine + 2 L-methionine + 2 oxidized [2Fe-2S]-[ferredoxin]. It participates in cofactor biosynthesis; biotin biosynthesis; biotin from 7,8-diaminononanoate: step 2/2. Its function is as follows. Catalyzes the conversion of dethiobiotin (DTB) to biotin by the insertion of a sulfur atom into dethiobiotin via a radical-based mechanism. This Campylobacter jejuni subsp. doylei (strain ATCC BAA-1458 / RM4099 / 269.97) protein is Biotin synthase.